The primary structure comprises 278 residues: ATP synthase subunit delta (278 aa).

This sequence belongs to the ATPase delta chain family. F-type ATPases have 2 components, F(1) - the catalytic core - and F(0) - the membrane proton channel. F(1) has five subunits: alpha(3), beta(3), gamma(1), delta(1), epsilon(1). F(0) has three main subunits: a(1), b(2) and c(10-14). The alpha and beta chains form an alternating ring which encloses part of the gamma chain. F(1) is attached to F(0) by a central stalk formed by the gamma and epsilon chains, while a peripheral stalk is formed by the delta and b chains.

It localises to the cell membrane. In terms of biological role, f(1)F(0) ATP synthase produces ATP from ADP in the presence of a proton or sodium gradient. F-type ATPases consist of two structural domains, F(1) containing the extramembraneous catalytic core and F(0) containing the membrane proton channel, linked together by a central stalk and a peripheral stalk. During catalysis, ATP synthesis in the catalytic domain of F(1) is coupled via a rotary mechanism of the central stalk subunits to proton translocation. Functionally, this protein is part of the stalk that links CF(0) to CF(1). It either transmits conformational changes from CF(0) to CF(1) or is implicated in proton conduction. The protein is ATP synthase subunit delta of Rhodococcus opacus (strain B4).